Reading from the N-terminus, the 473-residue chain is Zinc finger and BTB domain-containing protein 9 (473 aa).

One can recognise a BTB domain in the interval 48 to 112; sequence CDVSLLVQGR…IYSGRLRLPL (65 aa). The interval 177-279 is disordered; that stretch reads QTPVQSSAST…LELPAPPALP (103 aa). Residues 182 to 196 show a composition bias toward low complexity; sequence SSASTESPASTESPV. The span at 211–226 shows a compositional bias: acidic residues; sequence VEEEEEEEEDDDDEDQ. Polar residues predominate over residues 227–239; sequence GSATLSQTPQPQR. A Glycyl lysine isopeptide (Lys-Gly) (interchain with G-Cter in SUMO1); alternate cross-link involves residue K286. A Glycyl lysine isopeptide (Lys-Gly) (interchain with G-Cter in SUMO2); alternate cross-link involves residue K286. Residues K293 and K307 each participate in a glycyl lysine isopeptide (Lys-Gly) (interchain with G-Cter in SUMO2) cross-link. The tract at residues 293–376 is disordered; the sequence is KEEISGSGTQ…VHGPVKLGGT (84 aa). The span at 355–364 shows a compositional bias: gly residues; that stretch reads SGGGGPGGAG. A Glycyl lysine isopeptide (Lys-Gly) (interchain with G-Cter in SUMO2) cross-link involves residue K382. A C2H2-type 1 zinc finger spans residues 411–433; sequence FGCGICNKRFKLKHHLTEHMKTH. A C2H2-type 2; atypical zinc finger spans residues 438–460; the sequence is HACPHCGRRFRVHACFLRHRDLC.

The protein resides in the nucleus. In terms of biological role, may be involved in transcriptional regulation. This chain is Zinc finger and BTB domain-containing protein 9 (ZBTB9), found in Homo sapiens (Human).